A 490-amino-acid polypeptide reads, in one-letter code: ATP synthase subunit beta, chloroplastic (490 aa).

An ATP-binding site is contributed by 170–177 (GGXGVGKT).

It belongs to the ATPase alpha/beta chains family. F-type ATPases have 2 components, CF(1) - the catalytic core - and CF(0) - the membrane proton channel. CF(1) has five subunits: alpha(3), beta(3), gamma(1), delta(1), epsilon(1). CF(0) has four main subunits: a(1), b(1), b'(1) and c(9-12).

It localises to the plastid. The protein localises to the chloroplast thylakoid membrane. The enzyme catalyses ATP + H2O + 4 H(+)(in) = ADP + phosphate + 5 H(+)(out). Produces ATP from ADP in the presence of a proton gradient across the membrane. The catalytic sites are hosted primarily by the beta subunits. The polypeptide is ATP synthase subunit beta, chloroplastic (Ipomoea coccinea (Scarlet morning-glory)).